Consider the following 136-residue polypeptide: Probable disulfide formation protein (136 aa).

A helical transmembrane segment spans residues Ser-7–Phe-26. Residues Cys-36 and Cys-39 are joined by a disulfide bond. The next 2 membrane-spanning stretches (helical) occupy residues Tyr-41–Glu-60 and Tyr-67–Phe-84. A disulfide bond links Cys-96 and Cys-101. The helical transmembrane segment at Ser-109–Thr-131 threads the bilayer.

Belongs to the DsbB family. BdbC subfamily.

It localises to the cell inner membrane. Functionally, required for disulfide bond formation in some proteins. This Chlamydia pneumoniae (Chlamydophila pneumoniae) protein is Probable disulfide formation protein.